We begin with the raw amino-acid sequence, 362 residues long: Probable cysteine protease RDL2 (362 aa).

The first 28 residues, 1–28, serve as a signal peptide directing secretion; it reads MAATPIRVIVSALVILSVLLLSSSLGVA. A propeptide spans 29 to 129 (activation peptide); sequence TETEIERNET…ERYLYKEGDV (101 aa). N-linked (GlcNAc...) asparagine glycosylation is present at asparagine 36. 2 cysteine pairs are disulfide-bonded: cysteine 151/cysteine 194 and cysteine 185/cysteine 228. Residue cysteine 154 is part of the active site. N-linked (GlcNAc...) asparagine glycosylation occurs at asparagine 234. Cysteine 287 and cysteine 338 form a disulfide bridge. Catalysis depends on residues histidine 293 and asparagine 313.

The protein belongs to the peptidase C1 family.

Its function is as follows. Probable thiol protease. This Arabidopsis thaliana (Mouse-ear cress) protein is Probable cysteine protease RDL2.